An 884-amino-acid chain; its full sequence is MSGVNDIRSTFLDYFKKNGHEIVPSSPLVPRNDPTLMFTNAGMVQFKNVFTGLEKRPYSTATTSQKCVRAGGKHNDLDNVGYTARHLTFFEMLGNFSFGDYFKENAIELAWKLVTEGFDLPKNRLLVTVYSEDEEAATLWKKIAGFSDDKIIRISTSDNFWQMGDTGPCGPCSEIFIDQGENVWGGPPGSPEEDGDRFLEFWNLVFMQFEQTEPGVRNPLPRPSIDTGMGLERMACILQGVQSVFDTDLFRTLIGTIEDTMGVKAEGSASHRVIADHLRSSAFLIADGVLPSNEGRGYVLRRIMRRAMRHAQLLGAKEPLVYKLLPTLVQQMGRAYPELVRAEALISETLKLEENRFRKTLERGLSLLSDATTDLAKGDMLDGETAFKLYDTYGFPLDLTQDALRAREIGVDISGFTDAMQRQKAEARSHWAGSGEKATETVWFELKEKHGATEFLGYDTETAEGVVQAIVKDGAVAAEASAGDKVQIVVSQTPFYGESGGQMGDTGVISSDHGKIEISDTQKRGEGLFVHQGTVVDGVFKDGDAVVLTVDHARRSRLRANHSATHLLHEALREVLGTHVAQKGSLVAPERLRFDVSHPKPMSAEELKIVEDMANEIVLQNSPVTTRLMSVDDAIAEGAMALFGEKYGDEVRVVAMGEGVRGAKAGKPYSIELCGGTHVGATGQIGLIRVLGESAVGAGVRRIEAVTGESAREYLAEQDERVKTLAASLKVQPGEVLSRVEALMDERRKLEKELADAKRKLAMGGGQGGSVDAVREVAGVKFLGKAISGVDPKDLKGLADDGKTSIGSGVVALVGVSDDGKASAVVAVTPDLVQRYSAVDLVRIASAALGGKGGGGRPDMAQAGGPDGSKADEAIEAVAVALAG.

Zn(2+)-binding residues include His562, His566, Cys674, and His678.

Belongs to the class-II aminoacyl-tRNA synthetase family. It depends on Zn(2+) as a cofactor.

It localises to the cytoplasm. The enzyme catalyses tRNA(Ala) + L-alanine + ATP = L-alanyl-tRNA(Ala) + AMP + diphosphate. Catalyzes the attachment of alanine to tRNA(Ala) in a two-step reaction: alanine is first activated by ATP to form Ala-AMP and then transferred to the acceptor end of tRNA(Ala). Also edits incorrectly charged Ser-tRNA(Ala) and Gly-tRNA(Ala) via its editing domain. In Rhizobium johnstonii (strain DSM 114642 / LMG 32736 / 3841) (Rhizobium leguminosarum bv. viciae), this protein is Alanine--tRNA ligase.